A 330-amino-acid polypeptide reads, in one-letter code: D-lactate dehydrogenase (330 aa).

NAD(+)-binding positions include 155–156 (RI), Asp-175, 206–207 (MP), Asn-212, 233–235 (MAR), and Asp-259. Arg-235 is an active-site residue. Residue Glu-264 is part of the active site. His-296 serves as the catalytic Proton donor.

The protein belongs to the D-isomer specific 2-hydroxyacid dehydrogenase family.

The catalysed reaction is (R)-lactate + NAD(+) = pyruvate + NADH + H(+). This is D-lactate dehydrogenase (ldhD) from Streptococcus agalactiae serotype III (strain NEM316).